A 208-amino-acid chain; its full sequence is Small ribosomal subunit protein uS4 (208 aa).

The region spanning 98 to 158 is the S4 RNA-binding domain; sequence RRLDNVVYRL…EKNRKISVVA (61 aa).

This sequence belongs to the universal ribosomal protein uS4 family. Part of the 30S ribosomal subunit. Contacts protein S5. The interaction surface between S4 and S5 is involved in control of translational fidelity.

Its function is as follows. One of the primary rRNA binding proteins, it binds directly to 16S rRNA where it nucleates assembly of the body of the 30S subunit. Functionally, with S5 and S12 plays an important role in translational accuracy. The protein is Small ribosomal subunit protein uS4 of Lawsonia intracellularis (strain PHE/MN1-00).